The following is a 179-amino-acid chain: Interleukin-22 (179 aa).

The N-terminal stretch at 1–33 (MAALQKSVSSFLMGTLATSCLLLLALLVQGGAA) is a signal peptide. Disulfide bonds link Cys40–Cys132 and Cys89–Cys178. Asn54, Asn68, and Asn97 each carry an N-linked (GlcNAc...) asparagine glycan.

This sequence belongs to the IL-10 family.

The protein localises to the secreted. In terms of biological role, cytokine that plays a critical role in modulating tissue responses during inflammation. Plays an essential role in the regeneration of epithelial cells to maintain barrier function after injury and for the prevention of further tissue damage. Unlike most of the cytokines, has no effect on immune cells. Signals through a heterodimeric receptor composed of two subunits, the specific receptor IL22RA1 which is present on non-immune cells in many organs and the shared subunit IL10RB. Ligation of IL22RA1 with IL22 induces activation of the tyrosine kinases JAK1 and TYK2, which in turn activates STAT3. In turn, promotes cell survival and proliferation through STAT3, ERK1/2 and PI3K/AKT pathways. Promotes phosphorylation of GSK3B at 'Ser-9' and CTTN. Promotes epithelial cell spreading. The sequence is that of Interleukin-22 (IL22) from Homo sapiens (Human).